The following is a 270-amino-acid chain: Large ribosomal subunit protein uL2c (270 aa).

Residues 221–245 (NPIDHPHGGGEGRAPIGRNQPKTPW) form a disordered region.

This sequence belongs to the universal ribosomal protein uL2 family. As to quaternary structure, part of the 50S ribosomal subunit.

It localises to the plastid. The chain is Large ribosomal subunit protein uL2c (rpl2) from Cuscuta gronovii (Common dodder).